The sequence spans 488 residues: Spermatogenesis-associated protein 6 (488 aa).

An N-terminal signal peptide occupies residues Met-1 to Ser-17. Residues His-176 to Arg-225 are disordered. Residues Cys-200–Pro-220 show a composition bias toward polar residues. Ser-217 and Ser-219 each carry phosphoserine. A Glycyl lysine isopeptide (Lys-Gly) (interchain with G-Cter in SUMO2) cross-link involves residue Lys-248. Phosphoserine is present on residues Ser-265, Ser-274, Ser-325, Ser-343, Ser-346, Ser-354, Ser-424, Ser-465, and Ser-487.

This sequence belongs to the SPATA6 family. Interacts with MYL6. As to expression, specifically expressed in developing spermatids and mature spermatozoa (at protein level). Isoform 1 is weakly expressed in testis, ovary, thymus and placenta. Isoform 2 and isoform 3 are testis-specific. Expression isw higher in spermatids than in spermatocytes and spermatogonia.

It localises to the secreted. Its subcellular location is the cell projection. The protein localises to the cilium. The protein resides in the flagellum. Its function is as follows. Required for formation of the sperm connecting piece during spermiogenesis. Sperm connecting piece is essential for linking the developing flagellum to the head during late spermiogenesis. May be involved in myosin-based microfilament transport through interaction with myosin subunits. The polypeptide is Spermatogenesis-associated protein 6 (Mus musculus (Mouse)).